A 357-amino-acid polypeptide reads, in one-letter code: Probable leucine aminopeptidase MCYG_04170 (357 aa).

The first 15 residues, 1–15, serve as a signal peptide directing secretion; sequence MKVLAALALSALALA. N-linked (GlcNAc...) asparagine glycosylation occurs at Asn76. Residues His167 and Asp185 each contribute to the Zn(2+) site. An N-linked (GlcNAc...) asparagine glycan is attached at Asn186. Residues Glu224 and Asp251 each contribute to the Zn(2+) site. Cys291 and Cys295 are joined by a disulfide. His324 contacts Zn(2+).

It belongs to the peptidase M28 family. M28E subfamily. In terms of assembly, monomer. Requires Zn(2+) as cofactor.

It is found in the secreted. Its function is as follows. Probable extracellular aminopeptidase which contributes to pathogenicity. In Arthroderma otae (strain ATCC MYA-4605 / CBS 113480) (Microsporum canis), this protein is Probable leucine aminopeptidase MCYG_04170.